A 96-amino-acid polypeptide reads, in one-letter code: Cytoplasmic envelopment protein 3 (96 aa).

Glycine 2 carries N-myristoyl glycine; by host lipidation. Residues 18-19 (LI) carry the Di-leucine-like internalization motif motif. Positions 37-43 (DIESEEE) are asp/Glu-rich (acidic). Residue serine 40 is modified to Phosphoserine. The tract at residues 57–96 (RAPGRQRLRSSDPPSRHTHRRTPGGACPATQFPPPMSDSE) is disordered. Residues 87–96 (QFPPPMSDSE) are compositionally biased toward pro residues.

This sequence belongs to the herpesviridae cytoplasmic envelopment protein 3 family. In terms of assembly, interacts with cytoplasmic envelopment protein 2; this interaction is essential for the proper localization of each protein to the assembly complex and thus for the production of infectious virus. Interacts with gE (via C-terminus). Interacts with gD (via C-terminus). Interacts with UL56. Post-translationally, myristoylation and palmitoylation (probably on one or more of the nearby cysteines at the N-terminus) enable membrane-binding and Golgi apparatus-specific targeting and are essential for efficient packaging. Phosphorylated. Phosphorylation does not seem to be required for recycling to the host Golgi apparatus. Packaging is selective for underphosphorylated forms.

It localises to the virion tegument. Its subcellular location is the virion membrane. It is found in the host cell membrane. The protein resides in the host Golgi apparatus membrane. In terms of biological role, plays an important role in the cytoplasmic envelopment of tegument proteins and capsids during the assembly and egress processes. Also participates in viral entry at the fusion step probably by regulating the core fusion machinery. The polypeptide is Cytoplasmic envelopment protein 3 (Human herpesvirus 1 (strain KOS) (HHV-1)).